A 162-amino-acid polypeptide reads, in one-letter code: Endoribonuclease YbeY (162 aa).

Residues histidine 128, histidine 132, and histidine 138 each contribute to the Zn(2+) site.

This sequence belongs to the endoribonuclease YbeY family. Requires Zn(2+) as cofactor.

Its subcellular location is the cytoplasm. Functionally, single strand-specific metallo-endoribonuclease involved in late-stage 70S ribosome quality control and in maturation of the 3' terminus of the 16S rRNA. This chain is Endoribonuclease YbeY, found in Lactococcus lactis subsp. lactis (strain IL1403) (Streptococcus lactis).